The following is a 74-amino-acid chain: Defensin-like protein P322 (74 aa).

Positions 1 to 19 are cleaved as a signal peptide; that stretch reads MRFFATFFLLAMLVVATKM. Disulfide bonds link Cys-30-Cys-74, Cys-41-Cys-61, Cys-47-Cys-68, and Cys-51-Cys-70.

Belongs to the DEFL family. Protease inhibitor I18 (RTI/MTI-2) subfamily. Tuber.

The protein resides in the secreted. The chain is Defensin-like protein P322 from Solanum tuberosum (Potato).